The chain runs to 210 residues: 23 kDa jasmonate-induced protein (210 aa).

It belongs to the jasmonate-induced protein family.

The polypeptide is 23 kDa jasmonate-induced protein (Hordeum vulgare (Barley)).